Consider the following 404-residue polypeptide: tRNA-specific 2-thiouridylase MnmA (404 aa).

ATP-binding positions include 42–49 (GLSGGVDS) and Leu68. Cys129 (nucleophile) is an active-site residue. Cys129 and Cys239 are oxidised to a cystine. Gly154 is a binding site for ATP. Residues 189 to 191 (KDQ) form an interaction with tRNA region. Cys239 serves as the catalytic Cysteine persulfide intermediate. An interaction with tRNA region spans residues 344-345 (RY).

This sequence belongs to the MnmA/TRMU family.

The protein resides in the cytoplasm. It catalyses the reaction S-sulfanyl-L-cysteinyl-[protein] + uridine(34) in tRNA + AH2 + ATP = 2-thiouridine(34) in tRNA + L-cysteinyl-[protein] + A + AMP + diphosphate + H(+). Catalyzes the 2-thiolation of uridine at the wobble position (U34) of tRNA, leading to the formation of s(2)U34. The chain is tRNA-specific 2-thiouridylase MnmA from Prochlorococcus marinus (strain NATL1A).